The sequence spans 361 residues: D-alanine--D-alanine ligase (361 aa).

In terms of domain architecture, ATP-grasp spans 134–344 (KILAQRAGVP…YTDLITKLID (211 aa)). An ATP-binding site is contributed by 169–224 (ASQLGSDLFVKPSNQGSSVGVSHVTNEKEYKVALAEAFKYDDKVLVEETVHGTEVE). Aspartate 297, glutamate 311, and asparagine 313 together coordinate Mg(2+).

This sequence belongs to the D-alanine--D-alanine ligase family. It depends on Mg(2+) as a cofactor. Mn(2+) serves as cofactor.

It localises to the cytoplasm. The catalysed reaction is 2 D-alanine + ATP = D-alanyl-D-alanine + ADP + phosphate + H(+). The protein operates within cell wall biogenesis; peptidoglycan biosynthesis. In terms of biological role, cell wall formation. This is D-alanine--D-alanine ligase from Lactobacillus johnsonii (strain CNCM I-12250 / La1 / NCC 533).